Reading from the N-terminus, the 317-residue chain is Melanocyte-stimulating hormone receptor (317 aa).

At 1–37 (MPVQGSQRRLLGSLNSTPTATPKLGLAANQTGAQCLE) the chain is on the extracellular side. N-linked (GlcNAc...) asparagine glycosylation occurs at Asn29. Residues 38–63 (VSIPDGLFLSLGLVSLVENVLVVAAI) form a helical membrane-spanning segment. At 64–72 (ARNRNLHSP) the chain is on the cytoplasmic side. Residues 73 to 93 (MYCFICCLALSDLLVSGSNML) form a helical membrane-spanning segment. The Extracellular portion of the chain corresponds to 94–118 (ETAVILLLEAGALAARAAVVQQLDN). The chain crosses the membrane as a helical span at residues 119–140 (VIDVITCSSMLSSLCFLGAIAM). Residues 141-163 (DRYISIFYALRYHSIVTLPRARG) lie on the Cytoplasmic side of the membrane. A helical transmembrane segment spans residues 164-183 (VVAAIWVASILFSTLFIAYY). The Extracellular portion of the chain corresponds to 184–191 (DHVAVLLC). The chain crosses the membrane as a helical span at residues 192–211 (LVVFFLAMLVLMAVLYVHML). At 212-240 (ARACQHAQGIAQLHKRQRPAHQGVGLKGA) the chain is on the cytoplasmic side. The helical transmembrane segment at 241–266 (ATLTILLGIFFLCWGPFFLHLTLIVL) threads the bilayer. Residues 267–279 (CPQHPTCSCIFKN) lie on the Extracellular side of the membrane. Residues 280–300 (FNLFLALIICNAIIDPLIYAF) traverse the membrane as a helical segment. The Cytoplasmic segment spans residues 301 to 317 (RSQELRRTLKKVLLCSW). The S-palmitoyl cysteine moiety is linked to residue Cys315.

The protein belongs to the G-protein coupled receptor 1 family. Interacts with MGRN1, but does not undergo MGRN1-mediated ubiquitination; this interaction competes with GNAS-binding and thus inhibits agonist-induced cAMP production. Interacts with OPN3; the interaction results in a decrease in MC1R-mediated cAMP signaling and ultimately a decrease in melanin production in melanocytes.

The protein resides in the cell membrane. Its function is as follows. Receptor for MSH (alpha, beta and gamma) and ACTH. The activity of this receptor is mediated by G proteins which activate adenylate cyclase. Mediates melanogenesis, the production of eumelanin (black/brown) and phaeomelanin (red/yellow), via regulation of cAMP signaling in melanocytes. This chain is Melanocyte-stimulating hormone receptor (MC1R), found in Presbytis comata (Grizzled leaf monkey).